The primary structure comprises 157 residues: MLKTTKKSLLVFMGGFFLIFGVDQAIKYAILEGFRYESLMVDIVLVFNKGVAFSLLSFLEGGLKYLQILLILGLFIFLIRQIELFKTHAIEFGMVFGAGVSNVLDRFVHGGVVDYVYYHYGFDFAIFNFADVMIDVGVGVLLLRQFFFKQKQNKIKA.

A run of 4 helical transmembrane segments spans residues 10 to 30, 38 to 58, 59 to 79, and 84 to 104; these read LVFMGGFFLIFGVDQAIKYAI, SLMVDIVLVFNKGVAFSLLSF, LEGGLKYLQILLILGLFIFLI, and LFKTHAIEFGMVFGAGVSNVL. Residues Asp-114 and Asp-131 contribute to the active site. The helical transmembrane segment at 122–142 threads the bilayer; that stretch reads FDFAIFNFADVMIDVGVGVLL.

This sequence belongs to the peptidase A8 family.

It is found in the cell inner membrane. It carries out the reaction Release of signal peptides from bacterial membrane prolipoproteins. Hydrolyzes -Xaa-Yaa-Zaa-|-(S,diacylglyceryl)Cys-, in which Xaa is hydrophobic (preferably Leu), and Yaa (Ala or Ser) and Zaa (Gly or Ala) have small, neutral side chains.. It participates in protein modification; lipoprotein biosynthesis (signal peptide cleavage). Functionally, this protein specifically catalyzes the removal of signal peptides from prolipoproteins. The sequence is that of Lipoprotein signal peptidase from Helicobacter pylori (strain HPAG1).